The primary structure comprises 246 residues: Probable septum site-determining protein MinC (246 aa).

The protein belongs to the MinC family. Interacts with MinD and FtsZ.

Functionally, cell division inhibitor that blocks the formation of polar Z ring septums. Rapidly oscillates between the poles of the cell to destabilize FtsZ filaments that have formed before they mature into polar Z rings. Prevents FtsZ polymerization. The polypeptide is Probable septum site-determining protein MinC (Pseudomonas savastanoi pv. phaseolicola (strain 1448A / Race 6) (Pseudomonas syringae pv. phaseolicola (strain 1448A / Race 6))).